The primary structure comprises 119 residues: Large ribosomal subunit protein bL20 (119 aa).

It belongs to the bacterial ribosomal protein bL20 family.

Functionally, binds directly to 23S ribosomal RNA and is necessary for the in vitro assembly process of the 50S ribosomal subunit. It is not involved in the protein synthesizing functions of that subunit. The chain is Large ribosomal subunit protein bL20 from Bacillus pumilus (strain SAFR-032).